The primary structure comprises 249 residues: Superoxide dismutase 1 copper chaperone (249 aa).

In terms of domain architecture, HMA spans threonine 6–isoleucine 69. Histidine 16 is a binding site for Zn(2+). Cu cation-binding residues include cysteine 17 and cysteine 20. A disulfide bond links cysteine 27 and cysteine 64. Cysteine 229 and cysteine 231 together coordinate Cu cation.

Belongs to the CCS1 family. In terms of assembly, homodimer, and heterodimer with apo-SOD1. Zinc-binding at His-16 of CCS1 and 'Glu-43' of apo-SOD1 is required for this heterodimerization. Cu(2+) is required as a cofactor.

It localises to the cytoplasm. Its subcellular location is the mitochondrion intermembrane space. Copper chaperone for apo superoxide dismutase 1 (SOD1). Binds copper ions and delivers them specifically to apo-SOD1. In Saccharomyces cerevisiae (strain ATCC 204508 / S288c) (Baker's yeast), this protein is Superoxide dismutase 1 copper chaperone (CCS1).